The primary structure comprises 519 residues: MLTRFRSAVLRGAVSITGARAASTAPVADHKGRVGHVSQVIGAVVDVHFADGVPPVLTALDVVDKLGRDEPLTLEIVQHLDAHTGRCIAMQTTDLLKLKAKVVSTGGNISVPVGRETLGRIFNVLGDAIDQRGPVGEKLRMPIHAVAPKLADQAAEDAVLTTGIKVIDLILPYCKGGKIGLFGGAGVGKTVIIMELINNVAKGHGGFSVFAGVGERTREGTDLYLEMMQSKVIDLKGESKCVLVYGQMNEPPGARARVAQSALTMAEYFRDVEGQDVLLFIDNIFRFTQANSEVSALLGRIPAAVGYQPTLAEDLGQLQERITSTTKGSITSVQAVYVPADDITDPAPATTFSHLDATTVLDRAVAESGIYPAVNPLECASRIMDPDVISVDHYNVAQDVVQMLTKYRELQDIIAVLGIDELSEEDKLIVDRARKLVKFLSQPFQVAEVFTGMTGHYVQLDDTIDSFSGLLMGTYDQVPEMAFYMVGGINSVLEKAKKMAEEAAELEKMRRARVAQASS.

A mitochondrion-targeting transit peptide spans 1–21 (MLTRFRSAVLRGAVSITGARA). ATP-binding positions include 184–191 (GAGVGKTV) and R216.

This sequence belongs to the ATPase alpha/beta chains family. F-type ATPases have 2 components, F(1) - the catalytic core - and F(o) - the membrane proton channel. F(1) has five subunits: alpha(3), beta(3), gamma(1), delta(1), epsilon(1), plus the additional subunit P18 (Tb427.05.1710) that is not present in F(1)F(o) ATP synthase from metazoa. Subunit P18 (Tb927.5.1710) interacts with the alpha subunit with a 1:1 stoichiometry; the interaction is direct. Subunit gamma is part of the central stalk. F(o) has three main subunits: a, b and c. The trypanosomal ATPase complex contains additional subunits that are not present in the F(1)F(o) ATP synthase from metazoa.

The protein localises to the mitochondrion. It localises to the mitochondrion inner membrane. The enzyme catalyses ATP + H2O + 4 H(+)(in) = ADP + phosphate + 5 H(+)(out). Its function is as follows. Mitochondrial membrane ATP synthase (F(1)F(o) ATP synthase) produces ATP from ADP in the presence of a proton gradient across the membrane which is generated by electron transport complexes of the respiratory chain. F-type ATPases consist of two structural domains, F(1) - containing the extramembraneous catalytic core, and F(o) - containing the membrane proton channel, linked together by a central stalk and a peripheral stalk. During catalysis, ATP synthesis in the catalytic domain of F(1) is coupled via a rotary mechanism of the central stalk subunits to proton translocation. Subunits alpha and beta form the catalytic core in F(1). Rotation of the central stalk against the surrounding alpha(3)beta(3) subunits leads to hydrolysis of ATP in three separate catalytic sites on the beta subunits. Contrary to the procyclic, insect form that requires F(1)F(o) ATP synthase for ATP synthesis, the bloodstream form relies on ATP hydrolysis by F(1)F(o) ATP synthase to maintain its mitochondrial membrane potential. In Trypanosoma brucei brucei, this protein is ATP synthase subunit beta, mitochondrial.